Here is a 191-residue protein sequence, read N- to C-terminus: Peptidyl-tRNA hydrolase (191 aa).

Tyr14 contributes to the tRNA binding site. His19 acts as the Proton acceptor in catalysis. TRNA-binding residues include Tyr64, Asn66, and Asn112.

This sequence belongs to the PTH family. As to quaternary structure, monomer.

The protein localises to the cytoplasm. It catalyses the reaction an N-acyl-L-alpha-aminoacyl-tRNA + H2O = an N-acyl-L-amino acid + a tRNA + H(+). Hydrolyzes ribosome-free peptidyl-tRNAs (with 1 or more amino acids incorporated), which drop off the ribosome during protein synthesis, or as a result of ribosome stalling. Functionally, catalyzes the release of premature peptidyl moieties from peptidyl-tRNA molecules trapped in stalled 50S ribosomal subunits, and thus maintains levels of free tRNAs and 50S ribosomes. This Clostridium botulinum (strain Eklund 17B / Type B) protein is Peptidyl-tRNA hydrolase.